Here is an 88-residue protein sequence, read N- to C-terminus: Small ribosomal subunit protein uS15 (88 aa).

The protein belongs to the universal ribosomal protein uS15 family. Part of the 30S ribosomal subunit. Forms a bridge to the 50S subunit in the 70S ribosome, contacting the 23S rRNA.

In terms of biological role, one of the primary rRNA binding proteins, it binds directly to 16S rRNA where it helps nucleate assembly of the platform of the 30S subunit by binding and bridging several RNA helices of the 16S rRNA. Forms an intersubunit bridge (bridge B4) with the 23S rRNA of the 50S subunit in the ribosome. This is Small ribosomal subunit protein uS15 from Francisella tularensis subsp. holarctica (strain LVS).